The primary structure comprises 622 residues: 1-deoxy-D-xylulose-5-phosphate synthase (622 aa).

Thiamine diphosphate is bound by residues H74 and 115–117 (GHS). Residue D146 participates in Mg(2+) binding. Residues 147–148 (GA), N177, F285, and E366 each bind thiamine diphosphate. Mg(2+) is bound at residue N177.

This sequence belongs to the transketolase family. DXPS subfamily. Homodimer. The cofactor is Mg(2+). It depends on thiamine diphosphate as a cofactor.

It carries out the reaction D-glyceraldehyde 3-phosphate + pyruvate + H(+) = 1-deoxy-D-xylulose 5-phosphate + CO2. The protein operates within metabolic intermediate biosynthesis; 1-deoxy-D-xylulose 5-phosphate biosynthesis; 1-deoxy-D-xylulose 5-phosphate from D-glyceraldehyde 3-phosphate and pyruvate: step 1/1. In terms of biological role, catalyzes the acyloin condensation reaction between C atoms 2 and 3 of pyruvate and glyceraldehyde 3-phosphate to yield 1-deoxy-D-xylulose-5-phosphate (DXP). This Magnetococcus marinus (strain ATCC BAA-1437 / JCM 17883 / MC-1) protein is 1-deoxy-D-xylulose-5-phosphate synthase.